Consider the following 540-residue polypeptide: Phenylalanine--tRNA ligase beta subunit (540 aa).

Residues 270-347 (MTPRTLNVPR…IGYGFDKIKS (78 aa)) enclose the B5 domain. Mg(2+) is bound by residues Asp325, Asp331, Glu334, and Asp335.

It belongs to the phenylalanyl-tRNA synthetase beta subunit family. Type 2 subfamily. In terms of assembly, tetramer of two alpha and two beta subunits. Requires Mg(2+) as cofactor.

Its subcellular location is the cytoplasm. The enzyme catalyses tRNA(Phe) + L-phenylalanine + ATP = L-phenylalanyl-tRNA(Phe) + AMP + diphosphate + H(+). The polypeptide is Phenylalanine--tRNA ligase beta subunit (Methanococcoides burtonii (strain DSM 6242 / NBRC 107633 / OCM 468 / ACE-M)).